The chain runs to 242 residues: Uridylate kinase (242 aa).

Residue 16–19 (KVSG) participates in ATP binding. Glycine 58 provides a ligand contact to UMP. Glycine 59 and arginine 63 together coordinate ATP. UMP is bound by residues aspartate 78 and 139 to 146 (TGNPFCTT). Positions 166, 167, 172, and 175 each coordinate ATP.

This sequence belongs to the UMP kinase family. Homohexamer.

It localises to the cytoplasm. It carries out the reaction UMP + ATP = UDP + ADP. Its pathway is pyrimidine metabolism; CTP biosynthesis via de novo pathway; UDP from UMP (UMPK route): step 1/1. Inhibited by UTP. Functionally, catalyzes the reversible phosphorylation of UMP to UDP. The protein is Uridylate kinase of Rickettsia felis (strain ATCC VR-1525 / URRWXCal2) (Rickettsia azadi).